The chain runs to 461 residues: General transcription factor IIH subunit 2 (461 aa).

Polar residues predominate over residues 1–13; sequence MSKNIYNNNAQNK. Disordered regions lie at residues 1–37 and 61–83; these read MSKN…DEDG and LRPS…DRDG. The segment covering 61–71 has biased composition (basic and acidic residues); the sequence is LRPSNQEERNT. Positions 98 to 275 constitute a VWFA domain; that stretch reads HLCLILDLSK…ESLMLKCQPP (178 aa). The segment at 315–332 adopts a C4-type zinc-finger fold; it reads CPRCGVKSCELPTDCQIC. Residues 423-447 show a composition bias toward low complexity; it reads TNGKTNGNEITNGNGNGNGNENENG. The tract at residues 423-461 is disordered; that stretch reads TNGKTNGNEITNGNGNGNGNENENGNGNGNGNGNGNGLH. Residues 434-459 form a 13 X 2 tandem repeat of N-[GE] region; sequence NGNGNGNGNENENGNGNGNGNGNGNG. A compositionally biased stretch (gly residues) spans 448–461; that stretch reads NGNGNGNGNGNGLH.

This sequence belongs to the GTF2H2 family. Component of the 7-subunit TFIIH core complex composed of XPB/repB, XPD/repD, gtf2h1, gtf2h2, gtf2h3, gtf2h4 and gtf2h5, which is active in NER. The core complex associates with the 3-subunit CDK-activating kinase (CAK) module composed of cycH/cyclin H, cdk7 and mnat1 to form the 10-subunit holoenzyme (holo-TFIIH) active in transcription.

Its subcellular location is the nucleus. Its function is as follows. Component of the general transcription and DNA repair factor IIH (TFIIH) core complex, which is involved in general and transcription-coupled nucleotide excision repair (NER) of damaged DNA and, when complexed to CAK, in RNA transcription by RNA polymerase II. In NER, TFIIH acts by opening DNA around the lesion to allow the excision of the damaged oligonucleotide and its replacement by a new DNA fragment. In transcription, TFIIH has an essential role in transcription initiation. When the pre-initiation complex (PIC) has been established, TFIIH is required for promoter opening and promoter escape. Phosphorylation of the C-terminal tail (CTD) of the largest subunit of RNA polymerase II by the kinase module CAK controls the initiation of transcription. This chain is General transcription factor IIH subunit 2 (gtf2h2), found in Dictyostelium discoideum (Social amoeba).